A 275-amino-acid polypeptide reads, in one-letter code: 2,3,4,5-tetrahydropyridine-2,6-dicarboxylate N-succinyltransferase (275 aa).

Residues Arg104 and Asp141 each contribute to the substrate site.

This sequence belongs to the transferase hexapeptide repeat family. Homotrimer.

The protein localises to the cytoplasm. The enzyme catalyses (S)-2,3,4,5-tetrahydrodipicolinate + succinyl-CoA + H2O = (S)-2-succinylamino-6-oxoheptanedioate + CoA. The protein operates within amino-acid biosynthesis; L-lysine biosynthesis via DAP pathway; LL-2,6-diaminopimelate from (S)-tetrahydrodipicolinate (succinylase route): step 1/3. The protein is 2,3,4,5-tetrahydropyridine-2,6-dicarboxylate N-succinyltransferase of Mannheimia succiniciproducens (strain KCTC 0769BP / MBEL55E).